The sequence spans 579 residues: Arginine--tRNA ligase (579 aa).

The short motif at Pro-127 to His-137 is the 'HIGH' region element.

Belongs to the class-I aminoacyl-tRNA synthetase family. In terms of assembly, monomer.

The protein localises to the cytoplasm. It carries out the reaction tRNA(Arg) + L-arginine + ATP = L-arginyl-tRNA(Arg) + AMP + diphosphate. This chain is Arginine--tRNA ligase, found in Ectopseudomonas mendocina (strain ymp) (Pseudomonas mendocina).